The primary structure comprises 352 residues: tRNA N6-adenosine threonylcarbamoyltransferase (352 aa).

Residues His-115 and His-119 each coordinate Fe cation. Substrate-binding positions include 138–142 (LVSGG), Asp-171, Gly-184, and Asn-277. Residue Asp-305 coordinates Fe cation.

Belongs to the KAE1 / TsaD family. Fe(2+) is required as a cofactor.

It is found in the cytoplasm. The enzyme catalyses L-threonylcarbamoyladenylate + adenosine(37) in tRNA = N(6)-L-threonylcarbamoyladenosine(37) in tRNA + AMP + H(+). Required for the formation of a threonylcarbamoyl group on adenosine at position 37 (t(6)A37) in tRNAs that read codons beginning with adenine. Is involved in the transfer of the threonylcarbamoyl moiety of threonylcarbamoyl-AMP (TC-AMP) to the N6 group of A37, together with TsaE and TsaB. TsaD likely plays a direct catalytic role in this reaction. The polypeptide is tRNA N6-adenosine threonylcarbamoyltransferase (Variovorax paradoxus (strain S110)).